A 292-amino-acid polypeptide reads, in one-letter code: Probable 2-(5''-triphosphoribosyl)-3'-dephosphocoenzyme-A synthase (292 aa).

This sequence belongs to the CitG/MdcB family.

The enzyme catalyses 3'-dephospho-CoA + ATP = 2'-(5''-triphospho-alpha-D-ribosyl)-3'-dephospho-CoA + adenine. In Shigella boydii serotype 18 (strain CDC 3083-94 / BS512), this protein is Probable 2-(5''-triphosphoribosyl)-3'-dephosphocoenzyme-A synthase.